We begin with the raw amino-acid sequence, 251 residues long: Hydroxyacylglutathione hydrolase (251 aa).

Positions 53, 55, 57, 58, 110, 127, and 165 each coordinate Zn(2+).

It belongs to the metallo-beta-lactamase superfamily. Glyoxalase II family. Monomer. Zn(2+) is required as a cofactor.

It carries out the reaction an S-(2-hydroxyacyl)glutathione + H2O = a 2-hydroxy carboxylate + glutathione + H(+). The protein operates within secondary metabolite metabolism; methylglyoxal degradation; (R)-lactate from methylglyoxal: step 2/2. Its function is as follows. Thiolesterase that catalyzes the hydrolysis of S-D-lactoyl-glutathione to form glutathione and D-lactic acid. The chain is Hydroxyacylglutathione hydrolase from Escherichia coli O17:K52:H18 (strain UMN026 / ExPEC).